The following is a 382-amino-acid chain: D-galactonate dehydratase (382 aa).

Asp-183 contributes to the Mg(2+) binding site. His-185 (proton donor) is an active-site residue. Residues Glu-209 and Glu-235 each contribute to the Mg(2+) site. The Proton acceptor role is filled by His-285.

The protein belongs to the mandelate racemase/muconate lactonizing enzyme family. GalD subfamily. The cofactor is Mg(2+).

The catalysed reaction is D-galactonate = 2-dehydro-3-deoxy-D-galactonate + H2O. It participates in carbohydrate acid metabolism; D-galactonate degradation; D-glyceraldehyde 3-phosphate and pyruvate from D-galactonate: step 1/3. Catalyzes the dehydration of D-galactonate to 2-keto-3-deoxy-D-galactonate. In Klebsiella pneumoniae (strain 342), this protein is D-galactonate dehydratase.